The following is a 174-amino-acid chain: NADH-quinone oxidoreductase subunit I (174 aa).

2 4Fe-4S ferredoxin-type domains span residues 61–91 (LTVK…ITAA) and 103–132 (ISYE…LGPE). [4Fe-4S] cluster is bound by residues Cys71, Cys74, Cys77, Cys81, Cys112, Cys115, Cys118, and Cys122.

The protein belongs to the complex I 23 kDa subunit family. In terms of assembly, NDH-1 is composed of 14 different subunits. Subunits NuoA, H, J, K, L, M, N constitute the membrane sector of the complex. [4Fe-4S] cluster is required as a cofactor.

Its subcellular location is the cell inner membrane. It catalyses the reaction a quinone + NADH + 5 H(+)(in) = a quinol + NAD(+) + 4 H(+)(out). In terms of biological role, NDH-1 shuttles electrons from NADH, via FMN and iron-sulfur (Fe-S) centers, to quinones in the respiratory chain. The immediate electron acceptor for the enzyme in this species is believed to be ubiquinone. Couples the redox reaction to proton translocation (for every two electrons transferred, four hydrogen ions are translocated across the cytoplasmic membrane), and thus conserves the redox energy in a proton gradient. This Bdellovibrio bacteriovorus (strain ATCC 15356 / DSM 50701 / NCIMB 9529 / HD100) protein is NADH-quinone oxidoreductase subunit I.